A 525-amino-acid chain; its full sequence is tRNA(Ile)-lysidine synthase (525 aa).

32–37 contacts ATP; it reads SGGRDS.

Belongs to the tRNA(Ile)-lysidine synthase family.

The protein localises to the cytoplasm. It carries out the reaction cytidine(34) in tRNA(Ile2) + L-lysine + ATP = lysidine(34) in tRNA(Ile2) + AMP + diphosphate + H(+). Ligates lysine onto the cytidine present at position 34 of the AUA codon-specific tRNA(Ile) that contains the anticodon CAU, in an ATP-dependent manner. Cytidine is converted to lysidine, thus changing the amino acid specificity of the tRNA from methionine to isoleucine. This is tRNA(Ile)-lysidine synthase from Psychrobacter sp. (strain PRwf-1).